We begin with the raw amino-acid sequence, 420 residues long: Dynein axonemal assembly factor 4 (420 aa).

Residues 3 to 87 (LQVSDYSWQQ…KEAAMWETLS (85 aa)) enclose the CS domain. The segment at 7-103 (DYSWQQTKTA…EMMQRIREKS (97 aa)) is mediates interaction with ESR1 and STUB1. TPR repeat units lie at residues 290-323 (PEWL…NNKM), 324-357 (PLLY…LMPP), and 366-399 (MKAH…DPSN).

In terms of assembly, interacts with ZMYND10. Interacts with STUB1. Interacts with ESR1 and ESR2. Interacts with DNAAF2. Interacts with CCT3, CCT4, CCT5 and CCT8. Interacts with DNAAF6/PIH1D3.

Its subcellular location is the nucleus. It localises to the cytoplasm. The protein localises to the cell projection. It is found in the neuron projection. The protein resides in the dynein axonemal particle. Involved in neuronal migration during development of the cerebral neocortex. May regulate the stability and proteasomal degradation of the estrogen receptors that play an important role in neuronal differentiation, survival and plasticity. Axonemal dynein assembly factor required for ciliary motility. The sequence is that of Dynein axonemal assembly factor 4 from Pan troglodytes (Chimpanzee).